The chain runs to 201 residues: Protein CIMAP1C (201 aa).

An STPGR repeat occupies 171 to 186 (PAPTMSSRSGHTSPAR). The disordered stretch occupies residues 172–201 (APTMSSRSGHTSPARLLSPWASSTRPTYAR). Positions 191-201 (WASSTRPTYAR) are enriched in polar residues.

It belongs to the CIMAP family.

The chain is Protein CIMAP1C (CIMAP1C) from Bos taurus (Bovine).